Reading from the N-terminus, the 234-residue chain is CHD1 helical C-terminal domain containing protein 1 (234 aa).

The disordered stretch occupies residues 1–38 (MEASDGQADEREEPLEQGTNARSLERRSSTTPAKDSLV). Residues 44–145 (LDRDTFKICK…NNQTTKFLMA (102 aa)) form a CHD1 helical C-terminal domain (CHCT) region. Positions 200 to 234 (LRARGPRRRGSKLPQEPKLKRRRIKEAPDTPETCL) are disordered.

Its subcellular location is the cytoplasm. The protein localises to the nucleus. May play a role in regulation of apoptosis. The sequence is that of CHD1 helical C-terminal domain containing protein 1 (CHCT1) from Bos taurus (Bovine).